The primary structure comprises 323 residues: rRNA 2'-O-methyltransferase fibrillarin (323 aa).

A disordered region spans residues 1–80; the sequence is MGFERGGRGG…AKGGAAGKKV (80 aa). Residues Arg-5, Arg-8, Arg-12, Arg-16, Arg-23, Arg-26, Arg-30, Arg-34, Arg-41, Arg-47, Arg-49, Arg-53, Arg-57, Arg-62, Arg-64, and Arg-68 each carry the asymmetric dimethylarginine modification. Positions 8–76 are enriched in gly residues; it reads RGGARGGGRG…ARGGAKGGAA (69 aa). Residues 174-175, 193-194, 218-219, and 238-241 contribute to the S-adenosyl-L-methionine site; these read TS, EF, DA, and DVAQ.

This sequence belongs to the methyltransferase superfamily. Fibrillarin family. Component of box C/D small nucleolar ribonucleoprotein (snoRNP) particles. In terms of processing, by homology to other fibrillarins, some or all of the N-terminal domain arginines are modified to asymmetric dimethylarginine (DMA).

Its subcellular location is the nucleus. It localises to the nucleolus. The catalysed reaction is L-glutaminyl-[histone H2A] + S-adenosyl-L-methionine = N(5)-methyl-L-glutaminyl-[histone H2A] + S-adenosyl-L-homocysteine + H(+). Its function is as follows. S-adenosyl-L-methionine-dependent methyltransferase that has the ability to methylate both RNAs and proteins. Involved in pre-rRNA processing. Utilizes the methyl donor S-adenosyl-L-methionine to catalyze the site-specific 2'-hydroxyl methylation of ribose moieties in pre-ribosomal RNA. Site specificity is provided by a guide RNA that base pairs with the substrate. Methylation occurs at a characteristic distance from the sequence involved in base pairing with the guide RNA. Also acts as a protein methyltransferase by mediating methylation of 'Gln-105' of histone H2A (H2AQ105me), a modification that impairs binding of the FACT complex and is specifically present at 35S ribosomal DNA locus. This Neurospora crassa (strain ATCC 24698 / 74-OR23-1A / CBS 708.71 / DSM 1257 / FGSC 987) protein is rRNA 2'-O-methyltransferase fibrillarin (nop-1).